The following is a 157-amino-acid chain: Phosphopantetheine adenylyltransferase (157 aa).

Thr8 is a binding site for substrate. Residues 8–9 (TF) and His16 each bind ATP. Residues Lys40, Thr72, and Arg86 each contribute to the substrate site. ATP contacts are provided by residues 87-89 (GLR), Glu97, and 122-128 (YSFLSSS).

This sequence belongs to the bacterial CoaD family. In terms of assembly, homohexamer. It depends on Mg(2+) as a cofactor.

Its subcellular location is the cytoplasm. It catalyses the reaction (R)-4'-phosphopantetheine + ATP + H(+) = 3'-dephospho-CoA + diphosphate. It functions in the pathway cofactor biosynthesis; coenzyme A biosynthesis; CoA from (R)-pantothenate: step 4/5. Its function is as follows. Reversibly transfers an adenylyl group from ATP to 4'-phosphopantetheine, yielding dephospho-CoA (dPCoA) and pyrophosphate. This is Phosphopantetheine adenylyltransferase from Prochlorococcus marinus (strain MIT 9312).